We begin with the raw amino-acid sequence, 468 residues long: MSNIYIQEPPTNGKVLLKTTAGDIDIELWSKEAPKACRNFIQLCLEAYYDNTIFHRVVPGFIVQGGDPTGTGTGGESVYGAPFKDEFHSRLRFNRRGLVAMANAGPHDNGSQFFFTLGRADELNNKHTIFGKVTGDTVYNMLRLTEVDIDDEERPRNPHRIKSCEVLFNPFDDIIPREIKKPKKEKAEEEIKKLKPKGTKNFSLLSFGEEAEEEEEEVNRVSQSMKGRSKSSHDLLKDDPHLSSVPAVESEKDDATGDLEDDAEDDSVEHDGSMEEDEKNLMRERIAKRLKKDASANVKSAGDGEKKPASRSEELRKEARQLKRELLAAKQKKESATKAEKGSEEEEAVPDGPVAEYRREKQKYEALRKQQPKKGTSREDQTLALLSQFKSKLTQAITEMPENCAEAEVEDDEGWMSHVLQFEDKTRKVKDASMQDSDTFEIYDPRNPVNKRRREESKKLLREKKERR.

At S2 the chain carries N-acetylserine. The region spanning 11–166 is the PPIase cyclophilin-type domain; that stretch reads TNGKVLLKTT…NPHRIKSCEV (156 aa). Disordered stretches follow at residues 204–382 and 427–468; these read LLSF…EDQT and RKVK…KERR. A coiled-coil region spans residues 206–229; sequence SFGEEAEEEEEEVNRVSQSMKGRS. Residues 231–241 show a composition bias toward basic and acidic residues; that stretch reads SSHDLLKDDPH. Acidic residues predominate over residues 256-268; that stretch reads TGDLEDDAEDDSV. 2 stretches are compositionally biased toward basic and acidic residues: residues 269-287 and 302-342; these read EHDG…ERIA and GDGE…AEKG. S273 carries the phosphoserine modification. Positions 309-342 form a coiled coil; it reads ASRSEELRKEARQLKRELLAAKQKKESATKAEKG. S343 bears the Phosphoserine mark. Basic and acidic residues-rich tracts occupy residues 356–368 and 453–468; these read EYRR…EALR and RREE…KERR.

Belongs to the cyclophilin-type PPIase family. Part of the activated spliceosome B/catalytic step 1 spliceosome, one of the forms of the spliceosome which has a well-formed active site but still cannot catalyze the branching reaction and is composed at least of 52 proteins, the U2, U5 and U6 snRNAs and the pre-mRNA. Recruited during early steps of activated spliceosome B maturation, it is probably one of the first proteins released from this complex as he matures to the spliceosome C complex. Component of the minor spliceosome, which splices U12-type introns.

It is found in the nucleus. Its function is as follows. As part of the spliceosome, plays a role in pre-mRNA splicing. Probable inactive PPIase with no peptidyl-prolyl cis-trans isomerase activity. As a component of the minor spliceosome, involved in the splicing of U12-type introns in pre-mRNAs. This Rattus norvegicus (Rat) protein is Spliceosome-associated protein CWC27 homolog.